The following is a 171-amino-acid chain: Ribosome maturation factor RimM (171 aa).

Residues 97 to 170 (EGEYYYHEII…LVTIHVMEGL (74 aa)) enclose the PRC barrel domain.

It belongs to the RimM family. As to quaternary structure, binds ribosomal protein uS19.

It localises to the cytoplasm. Functionally, an accessory protein needed during the final step in the assembly of 30S ribosomal subunit, possibly for assembly of the head region. Essential for efficient processing of 16S rRNA. May be needed both before and after RbfA during the maturation of 16S rRNA. It has affinity for free ribosomal 30S subunits but not for 70S ribosomes. The protein is Ribosome maturation factor RimM of Bacillus cereus (strain ATCC 14579 / DSM 31 / CCUG 7414 / JCM 2152 / NBRC 15305 / NCIMB 9373 / NCTC 2599 / NRRL B-3711).